The following is a 181-amino-acid chain: Small acidic protein (181 aa).

A disordered region spans residues 1-181; sequence MSAARESHPH…KMMFVKSSGS (181 aa). Lys-13 is covalently cross-linked (Glycyl lysine isopeptide (Lys-Gly) (interchain with G-Cter in SUMO2)). Phosphoserine is present on residues Ser-15 and Ser-17. Residues 48-78 show a composition bias toward basic and acidic residues; the sequence is GKKEHTGRLVIGDHKSTSHFRTGEEDKKINE. Residue Lys-62 forms a Glycyl lysine isopeptide (Lys-Gly) (interchain with G-Cter in SUMO2) linkage. Position 63 is a phosphoserine (Ser-63). A Glycyl lysine isopeptide (Lys-Gly) (interchain with G-Cter in SUMO2) cross-link involves residue Lys-75. A phosphoserine mark is found at Ser-87, Ser-125, and Ser-145. A compositionally biased stretch (acidic residues) spans 106 to 146; that stretch reads EVEDHDGEGDVAGDDDEDDSPDAESPDDSDSDSESEKEESA. Residues 147–169 are compositionally biased toward basic and acidic residues; sequence EELHAAEHPDDTEDPKSKKDAKS. N6-acetyllysine is present on residues Lys-172 and Lys-177.

The protein belongs to the SMAP family.

This is Small acidic protein (Smap) from Mus musculus (Mouse).